The chain runs to 944 residues: Leucine--tRNA ligase (944 aa).

The 'HIGH' region motif lies at 40-51; sequence PYPSGAGLHVGH. The 'KMSKS' region signature appears at 718–722; the sequence is KMSKS. Position 721 (lysine 721) interacts with ATP.

This sequence belongs to the class-I aminoacyl-tRNA synthetase family.

The protein resides in the cytoplasm. The enzyme catalyses tRNA(Leu) + L-leucine + ATP = L-leucyl-tRNA(Leu) + AMP + diphosphate. The sequence is that of Leucine--tRNA ligase from Phocaeicola vulgatus (strain ATCC 8482 / DSM 1447 / JCM 5826 / CCUG 4940 / NBRC 14291 / NCTC 11154) (Bacteroides vulgatus).